The sequence spans 127 residues: ATP synthase epsilon chain (127 aa).

The protein belongs to the ATPase epsilon chain family. In terms of assembly, F-type ATPases have 2 components, CF(1) - the catalytic core - and CF(0) - the membrane proton channel. CF(1) has five subunits: alpha(3), beta(3), gamma(1), delta(1), epsilon(1). CF(0) has three main subunits: a, b and c.

The protein localises to the cell inner membrane. Produces ATP from ADP in the presence of a proton gradient across the membrane. This is ATP synthase epsilon chain from Leptospira interrogans serogroup Icterohaemorrhagiae serovar copenhageni (strain Fiocruz L1-130).